We begin with the raw amino-acid sequence, 457 residues long: Siroheme synthase (457 aa).

Residues 1 to 204 (MDHLPIFCQL…ADEKAVNATT (204 aa)) form a precorrin-2 dehydrogenase /sirohydrochlorin ferrochelatase region. Residues 22–23 (DV) and 43–44 (LT) contribute to the NAD(+) site. S128 bears the Phosphoserine mark. The interval 216–457 (GEVVLVGAGP…RDKLNWFSNH (242 aa)) is uroporphyrinogen-III C-methyltransferase. P225 provides a ligand contact to S-adenosyl-L-methionine. The Proton acceptor role is filled by D248. Residue K270 is the Proton donor of the active site. Residues 301 to 303 (GGD), I306, 331 to 332 (TA), M382, and G411 each bind S-adenosyl-L-methionine.

It in the N-terminal section; belongs to the precorrin-2 dehydrogenase / sirohydrochlorin ferrochelatase family. The protein in the C-terminal section; belongs to the precorrin methyltransferase family.

It carries out the reaction uroporphyrinogen III + 2 S-adenosyl-L-methionine = precorrin-2 + 2 S-adenosyl-L-homocysteine + H(+). The enzyme catalyses precorrin-2 + NAD(+) = sirohydrochlorin + NADH + 2 H(+). It catalyses the reaction siroheme + 2 H(+) = sirohydrochlorin + Fe(2+). Its pathway is cofactor biosynthesis; adenosylcobalamin biosynthesis; precorrin-2 from uroporphyrinogen III: step 1/1. It participates in cofactor biosynthesis; adenosylcobalamin biosynthesis; sirohydrochlorin from precorrin-2: step 1/1. It functions in the pathway porphyrin-containing compound metabolism; siroheme biosynthesis; precorrin-2 from uroporphyrinogen III: step 1/1. The protein operates within porphyrin-containing compound metabolism; siroheme biosynthesis; siroheme from sirohydrochlorin: step 1/1. Its pathway is porphyrin-containing compound metabolism; siroheme biosynthesis; sirohydrochlorin from precorrin-2: step 1/1. Functionally, multifunctional enzyme that catalyzes the SAM-dependent methylations of uroporphyrinogen III at position C-2 and C-7 to form precorrin-2 via precorrin-1. Then it catalyzes the NAD-dependent ring dehydrogenation of precorrin-2 to yield sirohydrochlorin. Finally, it catalyzes the ferrochelation of sirohydrochlorin to yield siroheme. The polypeptide is Siroheme synthase (Salmonella schwarzengrund (strain CVM19633)).